The following is a 447-amino-acid chain: Transcriptional enhancer factor TEF-4 (447 aa).

2 disordered regions span residues 1–46 and 183–218; these read MGEP…GVWS and TPFTLSLTPPSTDLPGYEPPQALSPLPPPTPSPPAW. Over residues 11-20 the composition is skewed to low complexity; the sequence is DDGSGWTGSE. The segment covering 25–40 has biased composition (gly residues); the sequence is EGTGGSEGAGGDGGPD. Residues 38–114 constitute a DNA-binding region (TEA); sequence GPDAEGVWSP…QVLARRKSRE (77 aa). The segment at 172–447 is transcriptional activation; it reads WNVPDVKPFS…QHHIYRLVRD (276 aa). Positions 183 to 206 are enriched in low complexity; that stretch reads TPFTLSLTPPSTDLPGYEPPQALS. Positions 207–216 are enriched in pro residues; the sequence is PLPPPTPSPP.

In terms of assembly, interacts with YAP1 and WWTR1/TAZ.

The protein localises to the nucleus. Functionally, transcription factor which plays a key role in the Hippo signaling pathway, a pathway involved in organ size control and tumor suppression by restricting proliferation and promoting apoptosis. The core of this pathway is composed of a kinase cascade wherein MST1/MST2, in complex with its regulatory protein SAV1, phosphorylates and activates LATS1/2 in complex with its regulatory protein MOB1, which in turn phosphorylates and inactivates YAP1 oncoprotein and WWTR1/TAZ. Acts by mediating gene expression of YAP1 and WWTR1/TAZ, thereby regulating cell proliferation, migration and epithelial mesenchymal transition (EMT) induction. Binds to the SPH and GT-IIC 'enhansons' (5'-GTGGAATGT-3'). May be involved in the gene regulation of neural development. Binds to the M-CAT motif. This is Transcriptional enhancer factor TEF-4 (TEAD2) from Homo sapiens (Human).